The chain runs to 164 residues: Crossover junction endodeoxyribonuclease RuvC (164 aa).

Residues Asp7, Glu67, and Asp139 contribute to the active site. Asp7, Glu67, and Asp139 together coordinate Mg(2+).

The protein belongs to the RuvC family. In terms of assembly, homodimer which binds Holliday junction (HJ) DNA. The HJ becomes 2-fold symmetrical on binding to RuvC with unstacked arms; it has a different conformation from HJ DNA in complex with RuvA. In the full resolvosome a probable DNA-RuvA(4)-RuvB(12)-RuvC(2) complex forms which resolves the HJ. Mg(2+) is required as a cofactor.

The protein resides in the cytoplasm. It carries out the reaction Endonucleolytic cleavage at a junction such as a reciprocal single-stranded crossover between two homologous DNA duplexes (Holliday junction).. In terms of biological role, the RuvA-RuvB-RuvC complex processes Holliday junction (HJ) DNA during genetic recombination and DNA repair. Endonuclease that resolves HJ intermediates. Cleaves cruciform DNA by making single-stranded nicks across the HJ at symmetrical positions within the homologous arms, yielding a 5'-phosphate and a 3'-hydroxyl group; requires a central core of homology in the junction. The consensus cleavage sequence is 5'-(A/T)TT(C/G)-3'. Cleavage occurs on the 3'-side of the TT dinucleotide at the point of strand exchange. HJ branch migration catalyzed by RuvA-RuvB allows RuvC to scan DNA until it finds its consensus sequence, where it cleaves and resolves the cruciform DNA. In Geobacter metallireducens (strain ATCC 53774 / DSM 7210 / GS-15), this protein is Crossover junction endodeoxyribonuclease RuvC.